The chain runs to 473 residues: Venom prothrombin activator vestarin-D1 (473 aa).

A signal peptide spans 1 to 20 (MAPQLLLCLIQTFLWSLPEA). A propeptide spanning residues 21–40 (ESNVFLKSNVANRFLQRTKR) is cleaved from the precursor. Residues 41–86 (ANSGFEEIYPANFERECVEERCSKEEAREVFEDDEKTEAFWTVYVD) form the Gla domain. Glu-46, Glu-47, Glu-54, Glu-56, Glu-59, Glu-60, Glu-65, Glu-66, Glu-69, Glu-72, and Glu-75 each carry 4-carboxyglutamate. Cysteines 57 and 62 form a disulfide. Positions 86–122 (DGDQCLSNPCHYGGTCKDGIGSYTCTCLAGYEGKNCE) constitute an EGF-like 1; calcium-binding domain. Intrachain disulfides connect Cys-90–Cys-101, Cys-95–Cys-110, Cys-112–Cys-121, Cys-129–Cys-140, Cys-136–Cys-149, Cys-151–Cys-164, Cys-172–Cys-335, Cys-235–Cys-240, Cys-383–Cys-397, and Cys-408–Cys-436. The O-linked (Hex...) serine glycan is linked to Ser-92. The EGF-like 2 domain maps to 129 to 164 (CRVDNGNCWHFCKPVQNDTQCSCAEGYRLGDNGFSC). Residues 182-228 (REASLPDFQTDFSDDYDAIDENNLIETVQSQSATLLKKSDNPNPDIR) constitute a propeptide, activation peptide. The 232-residue stretch at 229–460 (IVNGLDCKLG…FLPWIKTIMR (232 aa)) folds into the Peptidase S1 domain. His-270 acts as the Charge relay system in catalysis. N-linked (GlcNAc...) asparagine glycosylation is present at Asn-273. Asp-315 serves as the catalytic Charge relay system. Ser-412 serves as the catalytic Charge relay system.

It belongs to the peptidase S1 family. Snake venom subfamily. In terms of assembly, heterodimer of a light chain and a heavy chain; disulfide-linked. In terms of processing, the vitamin K-dependent, enzymatic carboxylation of some glutamate residues allows the modified protein to bind calcium. In terms of tissue distribution, expressed by the venom gland.

It is found in the secreted. The enzyme catalyses Selective cleavage of Arg-|-Thr and then Arg-|-Ile bonds in prothrombin to form thrombin.. Snake prothrombin activator that attacks the hemostatic system of prey. This protein is functionally similar to blood coagulation factor Xa. This Demansia vestigiata (Lesser black whip snake) protein is Venom prothrombin activator vestarin-D1.